The primary structure comprises 304 residues: Uricase (304 aa).

Ala2 is subject to N-acetylalanine. 2 positions are modified to N6-acetyllysine; alternate: Lys10 and Lys23. An N6-succinyllysine; alternate mark is found at Lys10 and Lys23. Lys23 acts as the Charge relay system in catalysis. N6-acetyllysine is present on residues Lys27 and Lys36. A phosphoserine mark is found at Ser39 and Ser63. Thr68 (charge relay system) is an active-site residue. Residues Thr68 and Asp69 each coordinate urate. Lys118, Lys122, and Lys164 each carry N6-acetyllysine. A urate-binding site is contributed by Phe170. 2 positions are modified to N6-acetyllysine: Lys175 and Lys185. Arg187 provides a ligand contact to urate. N6-acetyllysine; alternate is present on residues Lys221 and Lys228. N6-succinyllysine; alternate occurs at positions 221 and 228. Position 232 is a phosphoserine (Ser232). Positions 235, 236, and 262 each coordinate urate. The active-site Charge relay system is the His264. N6-acetyllysine is present on Lys278. Phosphotyrosine is present on Tyr289. The Microbody targeting signal motif lies at Ser302 to Leu304.

It belongs to the uricase family.

It is found in the peroxisome. The catalysed reaction is urate + O2 + H2O = 5-hydroxyisourate + H2O2. The protein operates within purine metabolism; urate degradation; (S)-allantoin from urate: step 1/3. Catalyzes the oxidation of uric acid to 5-hydroxyisourate, which is further processed to form (S)-allantoin. This chain is Uricase (UOX), found in Canis lupus familiaris (Dog).